Here is a 417-residue protein sequence, read N- to C-terminus: Magnesium-protoporphyrin IX monomethyl ester [oxidative] cyclase, chloroplastic (417 aa).

The transit peptide at 1-45 directs the protein to the chloroplast; the sequence is MASAMELSLLNPAMHHYGIAAKTASHLPVVPARRASSGAVRFRVR.

This sequence belongs to the AcsF family. Fe cation is required as a cofactor.

It localises to the plastid. The protein resides in the chloroplast membrane. It catalyses the reaction Mg-protoporphyrin IX 13-monomethyl ester + 3 NADPH + 3 O2 + 2 H(+) = 3,8-divinyl protochlorophyllide a + 3 NADP(+) + 5 H2O. Its pathway is porphyrin-containing compound metabolism; chlorophyll biosynthesis. Functionally, catalyzes the formation of the isocyclic ring in chlorophyll biosynthesis. Mediates the cyclase reaction, which results in the formation of divinylprotochlorophyllide (Pchlide) characteristic of all chlorophylls from magnesium-protoporphyrin IX 13-monomethyl ester (MgPMME). This chain is Magnesium-protoporphyrin IX monomethyl ester [oxidative] cyclase, chloroplastic (CRD1), found in Hordeum vulgare (Barley).